Here is a 114-residue protein sequence, read N- to C-terminus: Dihydroneopterin monophosphate aldolase (114 aa).

Zn(2+) is bound by residues His-15, His-26, and His-28.

It belongs to the PTPS family. Requires Zn(2+) as cofactor.

The catalysed reaction is 7,8-dihydroneopterin 3'-phosphate = glycolaldehyde phosphate + 6-hydroxymethyl-7,8-dihydropterin. Catalyzes the conversion of 7,8-dihydroneopterin monophosphate (H2NMP) to 6-hydroxymethyl-7,8-dihydropterin (6-HMD). Cannot use 7,8-dihydroneopterin (H2Neo) or 7,8-dihydroneopterin triphosphate (H2NTP) as substrate. This Pyrococcus furiosus (strain ATCC 43587 / DSM 3638 / JCM 8422 / Vc1) protein is Dihydroneopterin monophosphate aldolase.